A 75-amino-acid chain; its full sequence is Toxin-like peptide AaF1CA7 (75 aa).

The N-terminal stretch at 1–22 (MMKLMLFSIIVILFSLIGSIHG) is a signal peptide. In terms of domain architecture, LCN-type CS-alpha/beta spans 25-75 (VPGNYPLDSSDDTYLCAPLGENPSCIQICRKHGVKYGYCYAFQCWCEYFGR). Intrachain disulfides connect C40–C63, C49–C68, and C53–C70.

The protein belongs to the long (3 C-C) scorpion toxin superfamily. Expressed by the venom gland.

Its subcellular location is the secreted. Its function is as follows. Probable neurotoxin that inhibits ion channels. This is Toxin-like peptide AaF1CA7 from Androctonus australis (Sahara scorpion).